We begin with the raw amino-acid sequence, 383 residues long: Putative glutamate--cysteine ligase 2-2 (383 aa).

The protein belongs to the glutamate--cysteine ligase type 2 family. YbdK subfamily.

It catalyses the reaction L-cysteine + L-glutamate + ATP = gamma-L-glutamyl-L-cysteine + ADP + phosphate + H(+). ATP-dependent carboxylate-amine ligase which exhibits weak glutamate--cysteine ligase activity. This is Putative glutamate--cysteine ligase 2-2 from Legionella pneumophila (strain Paris).